Reading from the N-terminus, the 397-residue chain is ATP phosphoribosyltransferase regulatory subunit (397 aa).

Belongs to the class-II aminoacyl-tRNA synthetase family. HisZ subfamily. Heteromultimer composed of HisG and HisZ subunits.

The protein localises to the cytoplasm. The protein operates within amino-acid biosynthesis; L-histidine biosynthesis; L-histidine from 5-phospho-alpha-D-ribose 1-diphosphate: step 1/9. In terms of biological role, required for the first step of histidine biosynthesis. May allow the feedback regulation of ATP phosphoribosyltransferase activity by histidine. In Halalkalibacterium halodurans (strain ATCC BAA-125 / DSM 18197 / FERM 7344 / JCM 9153 / C-125) (Bacillus halodurans), this protein is ATP phosphoribosyltransferase regulatory subunit.